A 465-amino-acid polypeptide reads, in one-letter code: Beta-1,2-xylosyltransferase XYXT1 (465 aa).

The Cytoplasmic segment spans residues 1–11 (MKAAVRSKKSK). Residues 12-32 (GSFCHPPLLLLIVAIQFLVIY) traverse the membrane as a helical; Signal-anchor for type II membrane protein segment. Residues 33-465 (SPTLDQYMVM…VLLKALHLLR (433 aa)) lie on the Lumenal side of the membrane. Residues Asn80, Asn118, Asn125, Asn266, and Asn403 are each glycosylated (N-linked (GlcNAc...) asparagine).

Belongs to the glycosyltransferase 61 family. As to expression, widely expressed.

It is found in the golgi apparatus membrane. It participates in glycan metabolism. Functionally, glycosyltransferase involved in the xylosylation of xylan, the major hemicellulose (non-cellulosic component) of primary and secondary walls of angiosperms. Possesses beta-1,2-xylosyltransferase activity, transferring xylose from UDP-xylose to the xylan backbone. Catalyzes the addition of 2-O-xylosyl side chains to the xylan backbone. The polypeptide is Beta-1,2-xylosyltransferase XYXT1 (Oryza sativa subsp. japonica (Rice)).